Here is a 985-residue protein sequence, read N- to C-terminus: DNA ligase 4 (985 aa).

Disordered stretches follow at residues M1–H27 and L43–S70. Basic and acidic residues predominate over residues E10–P20. Residues N46–G61 are compositionally biased toward basic residues. Residues E310, K312, L313, R317, E379, F420, E480, K485, K502, and K504 each contribute to the ATP site. K312 functions as the N6-AMP-lysine intermediate in the catalytic mechanism. Mg(2+) is bound at residue E379. E480 lines the Mg(2+) pocket. BRCT domains are found at residues P711 to L804 and L878 to P983.

This sequence belongs to the ATP-dependent DNA ligase family. Mg(2+) is required as a cofactor.

Its subcellular location is the nucleus. It catalyses the reaction ATP + (deoxyribonucleotide)n-3'-hydroxyl + 5'-phospho-(deoxyribonucleotide)m = (deoxyribonucleotide)n+m + AMP + diphosphate.. Its function is as follows. DNA ligase involved in DNA non-homologous end joining (NHEJ); required for double-strand break (DSB) repair. The sequence is that of DNA ligase 4 (LIG4) from Coccidioides immitis (strain RS) (Valley fever fungus).